The primary structure comprises 715 residues: Methionine--tRNA ligase (715 aa).

Residues 17 to 27 (PYANGPIHLGH) carry the 'HIGH' region motif. The Zn(2+) site is built by Cys-148, Cys-151, Cys-161, and Cys-164. Residues 359–363 (KMSKS) carry the 'KMSKS' region motif. Lys-362 is a binding site for ATP. Residues 614–715 (DLSKVELRVG…KDAKPGDRLK (102 aa)) form the tRNA-binding domain.

This sequence belongs to the class-I aminoacyl-tRNA synthetase family. MetG type 1 subfamily. As to quaternary structure, homodimer. It depends on Zn(2+) as a cofactor.

It localises to the cytoplasm. The catalysed reaction is tRNA(Met) + L-methionine + ATP = L-methionyl-tRNA(Met) + AMP + diphosphate. Its function is as follows. Is required not only for elongation of protein synthesis but also for the initiation of all mRNA translation through initiator tRNA(fMet) aminoacylation. This is Methionine--tRNA ligase from Leptospira interrogans serogroup Icterohaemorrhagiae serovar Lai (strain 56601).